Here is a 409-residue protein sequence, read N- to C-terminus: NADH-quinone oxidoreductase subunit D (409 aa).

Belongs to the complex I 49 kDa subunit family. NDH-1 is composed of 14 different subunits. Subunits NuoB, C, D, E, F, and G constitute the peripheral sector of the complex.

Its subcellular location is the cell inner membrane. It catalyses the reaction a quinone + NADH + 5 H(+)(in) = a quinol + NAD(+) + 4 H(+)(out). In terms of biological role, NDH-1 shuttles electrons from NADH, via FMN and iron-sulfur (Fe-S) centers, to quinones in the respiratory chain. The immediate electron acceptor for the enzyme in this species is believed to be ubiquinone. Couples the redox reaction to proton translocation (for every two electrons transferred, four hydrogen ions are translocated across the cytoplasmic membrane), and thus conserves the redox energy in a proton gradient. This is NADH-quinone oxidoreductase subunit D from Helicobacter pylori (strain HPAG1).